The following is a 394-amino-acid chain: MNKYKRIFLVVMDSVGIGEAPDAEQFGDLGSDTIGHIAEHMNGLQMPNMVKLGLGNIREMKGISKVEKPLGYYTKMQEKSTGKDTMTGHWEIMGLYIDTPFQVFPEGFPKELLDELEEKTGRKIIGNKPASGTEILDELGQEQMETGSLIVYTSADSVLQIAAHEEVVPLDELYKICKIARELTLDEKYMVGRVIARPFVGEPGNFTRTPNRHDYALKPFGRTVMNELKDSDYDVIAIGKISDIYDGEGVTESLRTKSNMDGMDKLVDTLNMDFTGLSFLNLVDFDALFGHRRDPQGYGEALQEYDARLPEVFAKLQEDDLLLITADHGNDPIHPGTDHTREYVPLLAYSPSMKEGGQELPLRQTFADIGATVAENFGVKMPEYGTSFLNELKK.

Asp13, Asp286, His291, Asp327, His328, and His339 together coordinate Mn(2+).

This sequence belongs to the phosphopentomutase family. Mn(2+) serves as cofactor.

It localises to the cytoplasm. The catalysed reaction is 2-deoxy-alpha-D-ribose 1-phosphate = 2-deoxy-D-ribose 5-phosphate. It catalyses the reaction alpha-D-ribose 1-phosphate = D-ribose 5-phosphate. Its pathway is carbohydrate degradation; 2-deoxy-D-ribose 1-phosphate degradation; D-glyceraldehyde 3-phosphate and acetaldehyde from 2-deoxy-alpha-D-ribose 1-phosphate: step 1/2. Isomerase that catalyzes the conversion of deoxy-ribose 1-phosphate (dRib-1-P) and ribose 1-phosphate (Rib-1-P) to deoxy-ribose 5-phosphate (dRib-5-P) and ribose 5-phosphate (Rib-5-P), respectively. The sequence is that of Phosphopentomutase from Bacillus cereus (strain G9842).